The primary structure comprises 684 residues: Glycine--tRNA ligase beta subunit (684 aa).

Belongs to the class-II aminoacyl-tRNA synthetase family. As to quaternary structure, tetramer of two alpha and two beta subunits.

Its subcellular location is the cytoplasm. It carries out the reaction tRNA(Gly) + glycine + ATP = glycyl-tRNA(Gly) + AMP + diphosphate. The protein is Glycine--tRNA ligase beta subunit of Pseudomonas savastanoi pv. phaseolicola (strain 1448A / Race 6) (Pseudomonas syringae pv. phaseolicola (strain 1448A / Race 6)).